Reading from the N-terminus, the 599-residue chain is Leucine zipper putative tumor suppressor 1 (599 aa).

A lipid anchor (N-myristoyl glycine) is attached at G2. 2 disordered regions span residues 135 to 190 (GAIL…TTSS) and 288 to 324 (EFASGQTFEERPRRTRDELECLEPKSKLKPPSQKSQR). Residues 153 to 162 (PPDKPKEQEL) are compositionally biased toward basic and acidic residues. Polar residues predominate over residues 174–190 (SGRNSMSSLPTHSTTSS). A coiled-coil region spans residues 256-572 (LSTDECTIQE…LEKALQQLAR (317 aa)). Basic and acidic residues predominate over residues 288–313 (EFASGQTFEERPRRTRDELECLEPKS).

This sequence belongs to the LZTS family. As to quaternary structure, binds EEF1G, TLK2 and CDK1. In terms of processing, phosphorylated on serine residues. Hyperphosphorylated by the cAMP-dependent kinase PKA during cell-cycle progression.

It localises to the cytoplasm. It is found in the cell membrane. The protein localises to the cell projection. The protein resides in the dendritic spine. Its subcellular location is the postsynaptic density. It localises to the synapse. In terms of biological role, involved in the regulation of cell growth. May stabilize the active CDC2-cyclin B1 complex and thereby contribute to the regulation of the cell cycle and the prevention of uncontrolled cell proliferation. May act as tumor suppressor. This is Leucine zipper putative tumor suppressor 1 (Lzts1) from Mus musculus (Mouse).